Consider the following 114-residue polypeptide: MRVKKGYKARRRRNRVLKLAKGFRGRRKNCYRRANQAVERALDYATRDRRQKRRDFRALWIVRINAAARQNGTTYSRLLAGLKKAGVAIDRKILADLALALPGDFAAVVKAAKA.

This sequence belongs to the bacterial ribosomal protein bL20 family.

In terms of biological role, binds directly to 23S ribosomal RNA and is necessary for the in vitro assembly process of the 50S ribosomal subunit. It is not involved in the protein synthesizing functions of that subunit. This chain is Large ribosomal subunit protein bL20, found in Anaeromyxobacter sp. (strain Fw109-5).